Consider the following 903-residue polypeptide: Pentatricopeptide repeat-containing protein At3g02330, mitochondrial (903 aa).

Residues 1-31 constitute a mitochondrion transit peptide; the sequence is MAESLRLLHMTRSVVSFNRCLTEKISYRRVP. PPR repeat units lie at residues 47-81, 82-112, 113-143, 144-178, 179-213, 214-244, 245-279, 280-314, 346-380, 381-415, 416-446, 447-481, 482-515, 516-550, 567-601, 602-636, 637-667, 668-702, 703-738, and 739-769; these read STTNFSFVFKECAKQGALELGKQAHAHMIISGFRP, TTFVLNCLLQVYTNSRDFVSASMVFDKMPLR, DVVSWNKMINGYSKSNDMFKANSFFNMMPVR, DVVSWNSMLSGYLQNGESLKSIEVFVDMGREGIEF, DGRTFAIILKVCSFLEDTSLGMQIHGIVVRVGCDT, DVVAASALLDMYAKGKRFVESLRVFQGIPEK, NSVSWSAIIAGCVQNNLLSLALKFFKEMQKVNAGV, SQSIYASVLRSCAALSELRLGGQLHAHALKSDFAA, NRQSYNAMITGYSQEEHGFKALLLFHRLMSSGLGF, DEISLSGVFRACALVKGLSEGLQIYGLAIKSSLSL, DVCVANAAIDMYGKCQALAEAFRVFDEMRRR, DAVSWNAIIAAHEQNGKGYETLFLFVSMLRSRIEP, DEFTFGSILKACTGGSLGYGMEIHSSIVKSGMAS, NSSVGCSLIDMYSKCGMIEEAEKIHSRFFQRANVS, MCVSWNSIISGYVMKEQSEDAQMLFTRMMEMGITP, DKFTYATVLDTCANLASAGLGKQIHAQVIKKELQS, DVYICSTLVDMYSKCGDLHDSRLMFEKSLRR, DFVTWNAMICGYAHHGKGEEAIQLFERMILENIKP, NHVTFISILRACAHMGLIDKGLEYFYMMKRDYGLDP, and QLPHYSNMVDILGKSGKVKRALELIREMPFE. The type E motif stretch occupies residues 774-850; sequence IWRTLLGVCT…EPGCSWVELK (77 aa). The segment at 851 to 881 is type E(+) motif; it reads DELHVFLVGDKAHPRWEEIYEELGLIYSEMK.

The protein belongs to the PPR family. PCMP-E subfamily. Interacts with MORF1/RIP8.

It is found in the mitochondrion. Involved in C-to-U editing of mitochondrial RNA. Required for RNA editing at 8 sites in 6 different mRNAs in mitochondria. The polypeptide is Pentatricopeptide repeat-containing protein At3g02330, mitochondrial (PCMP-E90) (Arabidopsis thaliana (Mouse-ear cress)).